The following is a 170-amino-acid chain: Protein-export protein SecB (170 aa).

The protein belongs to the SecB family. In terms of assembly, homotetramer, a dimer of dimers. One homotetramer interacts with 1 SecA dimer.

The protein resides in the cytoplasm. Functionally, one of the proteins required for the normal export of preproteins out of the cell cytoplasm. It is a molecular chaperone that binds to a subset of precursor proteins, maintaining them in a translocation-competent state. It also specifically binds to its receptor SecA. The chain is Protein-export protein SecB from Xanthomonas axonopodis pv. citri (strain 306).